The following is a 130-amino-acid chain: Small ribosomal subunit protein uS11 (130 aa).

Residues 1-21 are disordered; the sequence is MAPQSKRSGGRKQKKHVPNGV. The segment covering 8–17 has biased composition (basic residues); the sequence is SGGRKQKKHV.

It belongs to the universal ribosomal protein uS11 family. In terms of assembly, part of the 30S ribosomal subunit. Interacts with proteins S7 and S18. Binds to IF-3.

Located on the platform of the 30S subunit, it bridges several disparate RNA helices of the 16S rRNA. Forms part of the Shine-Dalgarno cleft in the 70S ribosome. The sequence is that of Small ribosomal subunit protein uS11 from Acaryochloris marina (strain MBIC 11017).